Here is a 336-residue protein sequence, read N- to C-terminus: Phenylalanine--tRNA ligase alpha subunit (336 aa).

Glutamate 263 is a Mg(2+) binding site.

It belongs to the class-II aminoacyl-tRNA synthetase family. Phe-tRNA synthetase alpha subunit type 1 subfamily. As to quaternary structure, tetramer of two alpha and two beta subunits. Mg(2+) is required as a cofactor.

It localises to the cytoplasm. It carries out the reaction tRNA(Phe) + L-phenylalanine + ATP = L-phenylalanyl-tRNA(Phe) + AMP + diphosphate + H(+). This Thermosynechococcus vestitus (strain NIES-2133 / IAM M-273 / BP-1) protein is Phenylalanine--tRNA ligase alpha subunit.